Here is a 405-residue protein sequence, read N- to C-terminus: Tyrosine--tRNA ligase (405 aa).

The short motif at 46 to 55 (PTRPDIHLGH) is the 'HIGH' region element. The 'KMSKS' region signature appears at 230 to 234 (KMSKS). Lys233 lines the ATP pocket. The region spanning 341-404 (MGLAALMVKA…GKKKFVKIVV (64 aa)) is the S4 RNA-binding domain.

It belongs to the class-I aminoacyl-tRNA synthetase family. TyrS type 2 subfamily. As to quaternary structure, homodimer.

The protein localises to the cytoplasm. It carries out the reaction tRNA(Tyr) + L-tyrosine + ATP = L-tyrosyl-tRNA(Tyr) + AMP + diphosphate + H(+). In terms of biological role, catalyzes the attachment of tyrosine to tRNA(Tyr) in a two-step reaction: tyrosine is first activated by ATP to form Tyr-AMP and then transferred to the acceptor end of tRNA(Tyr). This is Tyrosine--tRNA ligase from Bdellovibrio bacteriovorus (strain ATCC 15356 / DSM 50701 / NCIMB 9529 / HD100).